Here is a 490-residue protein sequence, read N- to C-terminus: Probable cytosol aminopeptidase (490 aa).

Lysine 258 and aspartate 263 together coordinate Mn(2+). The active site involves lysine 270. Aspartate 282, aspartate 341, and glutamate 343 together coordinate Mn(2+). Arginine 345 is a catalytic residue.

This sequence belongs to the peptidase M17 family. The cofactor is Mn(2+).

The protein resides in the cytoplasm. It carries out the reaction Release of an N-terminal amino acid, Xaa-|-Yaa-, in which Xaa is preferably Leu, but may be other amino acids including Pro although not Arg or Lys, and Yaa may be Pro. Amino acid amides and methyl esters are also readily hydrolyzed, but rates on arylamides are exceedingly low.. It catalyses the reaction Release of an N-terminal amino acid, preferentially leucine, but not glutamic or aspartic acids.. Presumably involved in the processing and regular turnover of intracellular proteins. Catalyzes the removal of unsubstituted N-terminal amino acids from various peptides. The protein is Probable cytosol aminopeptidase of Microcystis aeruginosa (strain NIES-843 / IAM M-2473).